The primary structure comprises 241 residues: ATP-dependent Clp protease ATP-binding subunit CLPT2, chloroplastic (241 aa).

Residues 1 to 75 (MAAHSSCNFA…PRRIHKSAIS (75 aa)) constitute a chloroplast transit peptide. The Clp R domain maps to 91–237 (KPKWSWRAIK…ELESFASESG (147 aa)). Repeat regions lie at residues 94–159 (WSWR…LGKA) and 171–237 (LTED…SESG).

Belongs to the ClpA/ClpB family. As to quaternary structure, monomer and homodimer. The dimers monomerize before association to the P-ring. Component of the chloroplastic Clp protease core complex which consist of at least 16 proteins: CLPP4 (3 copies), CLPP5 (3 copies), CLPR4 (2 copies), ClpP1 (1 copy), CLPP6 (1 copy), CLPR2 (1 copy), CLPT1 (1 copy), CLPT2 (1 copy) and 3 copies of CLPP3 and/or CLPR1 and/or CLPR3. Interacts with AHK2. Interacts with CPN21. No interactions with CLPS1.

It is found in the plastid. The protein resides in the chloroplast. In terms of biological role, accessory protein regulating the assembly of the plastidial Clp protease system. CLPT1 first binds to the heptameric P-ring containing the CLP3-6 subunits followed by CLPT2, and only then does the P-ring combine with the R-ring composed of the clpP1 and CLPR1-4 subunits. Once the core complex is fully assembled, it then associates to the CLPC chaperone partner to form the functional protease. CLPT2 and CLPT1 are partially redundant. The chain is ATP-dependent Clp protease ATP-binding subunit CLPT2, chloroplastic from Arabidopsis thaliana (Mouse-ear cress).